Reading from the N-terminus, the 147-residue chain is Large ribosomal subunit protein bL9 (147 aa).

Belongs to the bacterial ribosomal protein bL9 family.

Functionally, binds to the 23S rRNA. The polypeptide is Large ribosomal subunit protein bL9 (Citrifermentans bemidjiense (strain ATCC BAA-1014 / DSM 16622 / JCM 12645 / Bem) (Geobacter bemidjiensis)).